Reading from the N-terminus, the 36-residue chain is Dolichyl-diphosphooligosaccharide--protein glycosyltransferase subunit 2 (36 aa).

Belongs to the SWP1 family. As to quaternary structure, component of the oligosaccharyltransferase (OST) complex.

It is found in the endoplasmic reticulum. Its subcellular location is the endoplasmic reticulum membrane. It functions in the pathway protein modification; protein glycosylation. In terms of biological role, subunit of the oligosaccharyl transferase (OST) complex that catalyzes the initial transfer of a defined glycan (Glc(3)Man(9)GlcNAc(2) in eukaryotes) from the lipid carrier dolichol-pyrophosphate to an asparagine residue within an Asn-X-Ser/Thr consensus motif in nascent polypeptide chains, the first step in protein N-glycosylation. N-glycosylation occurs cotranslationally and the complex associates with the Sec61 complex at the channel-forming translocon complex that mediates protein translocation across the endoplasmic reticulum (ER). All subunits are required for a maximal enzyme activity. This Gallus gallus (Chicken) protein is Dolichyl-diphosphooligosaccharide--protein glycosyltransferase subunit 2.